Consider the following 166-residue polypeptide: Regulatory protein RecX (166 aa).

It belongs to the RecX family.

It is found in the cytoplasm. In terms of biological role, modulates RecA activity. In Escherichia coli (strain SE11), this protein is Regulatory protein RecX.